The chain runs to 1135 residues: Nonribosomal peptide synthetase 9 (1135 aa).

Residues 23 to 77 are condensation 1; sequence TKQITTATYIKLAWAVVISCNTGSNDTVFGITVNGRGAPIDGAGEMTGATIATIP. Residues 177 to 562 are adenylation; the sequence is SYAELIRSAN…RRIDEIQEAT (386 aa). Positions 485–507 are disordered; it reads GPSPPVGRSSSNRAGSGRCAMGS. Residues 491–502 are compositionally biased toward low complexity; that stretch reads GRSSSNRAGSGR. Residues 672–748 form the Carrier domain; sequence APSNRVEQDL…AIANKIGDVQ (77 aa). S709 carries the O-(pantetheine 4'-phosphoryl)serine modification. Residues 746 to 999 are condensation 2; it reads DVQRAAIKLV…TTLWPVVAQV (254 aa).

Belongs to the NRP synthetase family.

In terms of biological role, nonribosomal peptide synthesis (NRPS) is a key mechanism responsible for the biosynthesis of bioactive metabolites which are potentially contributing to organismal virulence. This Aspergillus fumigatus (strain ATCC MYA-4609 / CBS 101355 / FGSC A1100 / Af293) (Neosartorya fumigata) protein is Nonribosomal peptide synthetase 9 (NRPS9).